The sequence spans 497 residues: tRNA-2-methylthio-N(6)-dimethylallyladenosine synthase (497 aa).

A disordered region spans residues 1-48; it reads MTGTSNIPTHGKEHKDAPALLPLPAPNTHHTHAAHPGDPSHDRHPSRG. Residues 18-28 are compositionally biased toward low complexity; sequence PALLPLPAPNT. Positions 48 to 165 constitute an MTTase N-terminal domain; sequence GKLFIKTHGC…LPDMIRARRE (118 aa). [4Fe-4S] cluster-binding residues include C57, C94, C128, C202, C206, and C209. The 243-residue stretch at 188 to 430 folds into the Radical SAM core domain; that stretch reads RAEGPSAFVS…QKHINAYAAD (243 aa). In terms of domain architecture, TRAM spans 433–496; the sequence is KRMIGTVQTV…TNSLRGRVHT (64 aa).

The protein belongs to the methylthiotransferase family. MiaB subfamily. As to quaternary structure, monomer. It depends on [4Fe-4S] cluster as a cofactor.

Its subcellular location is the cytoplasm. It catalyses the reaction N(6)-dimethylallyladenosine(37) in tRNA + (sulfur carrier)-SH + AH2 + 2 S-adenosyl-L-methionine = 2-methylsulfanyl-N(6)-dimethylallyladenosine(37) in tRNA + (sulfur carrier)-H + 5'-deoxyadenosine + L-methionine + A + S-adenosyl-L-homocysteine + 2 H(+). In terms of biological role, catalyzes the methylthiolation of N6-(dimethylallyl)adenosine (i(6)A), leading to the formation of 2-methylthio-N6-(dimethylallyl)adenosine (ms(2)i(6)A) at position 37 in tRNAs that read codons beginning with uridine. The sequence is that of tRNA-2-methylthio-N(6)-dimethylallyladenosine synthase from Xylella fastidiosa (strain M23).